A 1220-amino-acid chain; its full sequence is DNA polymerase catalytic subunit (1220 aa).

2 disordered regions span residues 21–43 (GKRP…RPPQ) and 641–691 (QADA…KPGV). Residues 646–660 (SETSELAMDSQSHAF) are compositionally biased toward polar residues.

Belongs to the DNA polymerase type-B family. In terms of assembly, forms a complex with the ssDNA-binding protein, the DNA polymerase processivity factor, and the alkaline exonuclease. Interacts with the helicase-primase complex composed of the primase, the helicase and the primase-associated factor; this interaction may coordinate leading and lagging strand DNA synthesis at the replication fork.

It is found in the host nucleus. It catalyses the reaction DNA(n) + a 2'-deoxyribonucleoside 5'-triphosphate = DNA(n+1) + diphosphate. It carries out the reaction Endonucleolytic cleavage to 5'-phosphomonoester.. Functionally, replicates viral genomic DNA. The replication complex is composed of six viral proteins: the DNA polymerase, processivity factor, primase, primase-associated factor, helicase, and ssDNA-binding protein. Additionally, the polymerase contains an intrinsic ribonuclease H (RNase H) activity that specifically degrades RNA/DNA heteroduplexes or duplex DNA substrates in the 5' to 3' direction. Therefore, it can catalyze the excision of the RNA primers that initiate the synthesis of Okazaki fragments at a replication fork during viral DNA replication. The sequence is that of DNA polymerase catalytic subunit from Equus caballus (Horse).